The sequence spans 222 residues: dTTP/UTP pyrophosphatase (222 aa).

Aspartate 83 functions as the Proton acceptor in the catalytic mechanism.

Belongs to the Maf family. YhdE subfamily. A divalent metal cation serves as cofactor.

The protein resides in the cytoplasm. The catalysed reaction is dTTP + H2O = dTMP + diphosphate + H(+). The enzyme catalyses UTP + H2O = UMP + diphosphate + H(+). In terms of biological role, nucleoside triphosphate pyrophosphatase that hydrolyzes dTTP and UTP. May have a dual role in cell division arrest and in preventing the incorporation of modified nucleotides into cellular nucleic acids. In Desulfitobacterium hafniense (strain Y51), this protein is dTTP/UTP pyrophosphatase.